Here is a 310-residue protein sequence, read N- to C-terminus: Putative type II methyltransferase M.MJ0563P (310 aa).

The SAM-dependent MTase C5-type domain occupies 1–310 (MNVIDLFSGC…AIAKEIKKQL (310 aa)). Residue cysteine 77 is part of the active site.

The protein belongs to the class I-like SAM-binding methyltransferase superfamily. C5-methyltransferase family.

It catalyses the reaction a 2'-deoxycytidine in DNA + S-adenosyl-L-methionine = a 5-methyl-2'-deoxycytidine in DNA + S-adenosyl-L-homocysteine + H(+). In terms of biological role, a putative methylase that may protect DNA from cleavage by an unknown endonuclease. This is Putative type II methyltransferase M.MJ0563P from Methanocaldococcus jannaschii (strain ATCC 43067 / DSM 2661 / JAL-1 / JCM 10045 / NBRC 100440) (Methanococcus jannaschii).